The following is a 266-amino-acid chain: Single-stranded DNA-binding protein WHY1, chloroplastic (266 aa).

A chloroplast-targeting transit peptide spans 1–37 (MPPPAPLFLSLASTPPPALMPVHHPRAPQSLTLVPPV). Residues 53 to 81 (SPRHSDYFDPRAPPPPRGDGGYGRPPNGA) form a disordered region. Positions 94-99 (KGKAAL) are required for ssDNA binding. Positions 172–185 (KGRSEEGKVRKVLK) match the Nuclear localization signal motif.

It belongs to the Whirly family. Homotetramer.

The protein localises to the plastid. It localises to the chloroplast stroma. Its subcellular location is the nucleus. Functionally, single-stranded DNA and RNA binding protein that maintains plastid genome stability by preventing break-induced and short homology-dependent illegitimate recombinations. Functions in RNA metabolism and is involved in the maturation of the atpF and 23S ribosomal RNAs. This is Single-stranded DNA-binding protein WHY1, chloroplastic (WHY1) from Zea mays (Maize).